Consider the following 146-residue polypeptide: Anti-sigma F factor (146 aa).

This sequence belongs to the anti-sigma-factor family.

The catalysed reaction is L-seryl-[protein] + ATP = O-phospho-L-seryl-[protein] + ADP + H(+). It carries out the reaction L-threonyl-[protein] + ATP = O-phospho-L-threonyl-[protein] + ADP + H(+). Its function is as follows. Binds to sigma F and blocks its ability to form an RNA polymerase holoenzyme (E-sigma F). Phosphorylates SpoIIAA on a serine residue. This phosphorylation may enable SpoIIAA to act as an anti-anti-sigma factor that counteracts SpoIIAB and thus releases sigma F from inhibition. The protein is Anti-sigma F factor of Bacillus cytotoxicus (strain DSM 22905 / CIP 110041 / 391-98 / NVH 391-98).